Here is a 1390-residue protein sequence, read N- to C-terminus: Hepatocyte growth factor receptor (1390 aa).

The first 24 residues, 1–24, serve as a signal peptide directing secretion; it reads MKTPAVLAPGILVLLFTLVQRSNG. The Extracellular portion of the chain corresponds to 25 to 932; it reads ECKEALAKSK…VIVQPDQNFT (908 aa). The region spanning 27–515 is the Sema domain; that stretch reads KEALAKSKMN…TGKKITKIPL (489 aa). A glycan (N-linked (GlcNAc...) asparagine) is linked at asparagine 45. Cystine bridges form between cysteine 95/cysteine 101, cysteine 98/cysteine 160, cysteine 133/cysteine 141, and cysteine 172/cysteine 175. N-linked (GlcNAc...) asparagine glycosylation occurs at asparagine 106. Asparagine 149 carries N-linked (GlcNAc...) asparagine glycosylation. A glycan (N-linked (GlcNAc...) asparagine) is linked at asparagine 202. 2 cysteine pairs are disulfide-bonded: cysteine 298–cysteine 363 and cysteine 385–cysteine 397. 2 N-linked (GlcNAc...) asparagine glycosylation sites follow: asparagine 399 and asparagine 405. Disulfide bonds link cysteine 520-cysteine 538, cysteine 526-cysteine 561, cysteine 529-cysteine 545, and cysteine 541-cysteine 551. 3 IPT/TIG domains span residues 563-655, 657-739, and 742-836; these read PAIY…FSYV, PVIT…FSYR, and PIVY…LIYV. An O-linked (Man) threonine glycan is attached at threonine 582. N-linked (GlcNAc...) asparagine glycosylation is found at asparagine 607 and asparagine 635. O-linked (Man) threonine glycans are attached at residues threonine 676 and threonine 761. Residues asparagine 785, asparagine 879, and asparagine 930 are each glycosylated (N-linked (GlcNAc...) asparagine). A helical transmembrane segment spans residues 933–955; sequence GLIAGVVSISVALLLLLGFFLWL. Over 956-1390 the chain is Cytoplasmic; the sequence is KKRKQIKDLG…TRPASFWETS (435 aa). The residue at position 966 (serine 966) is a Phosphoserine. A Phosphothreonine modification is found at threonine 977. Phosphoserine occurs at positions 990, 997, and 1000. Position 1003 is a phosphotyrosine (tyrosine 1003). Residues 1078–1345 form the Protein kinase domain; the sequence is VHFNEVIGRG…RISAIFSTFI (268 aa). ATP contacts are provided by residues 1084–1092 and lysine 1110; that span reads IGRGHFGCV. The active-site Proton acceptor is aspartate 1204. An interaction with RANBP9 region spans residues 1212 to 1381; sequence LDEKFTVKVA…EDNADNEVDT (170 aa). The residue at position 1230 (tyrosine 1230) is a Phosphotyrosine. A phosphotyrosine; by autocatalysis mark is found at tyrosine 1234 and tyrosine 1235. A Phosphothreonine modification is found at threonine 1289. The interaction with MUC20 stretch occupies residues 1320–1359; it reads WHPKAEMRPSFSELVSRISAIFSTFIGEHYVHVNATYVNV. Phosphotyrosine; by autocatalysis is present on residues tyrosine 1349 and tyrosine 1356. The residue at position 1365 (tyrosine 1365) is a Phosphotyrosine.

It belongs to the protein kinase superfamily. Tyr protein kinase family. In terms of assembly, heterodimer made of an alpha chain (50 kDa) and a beta chain (145 kDa) which are disulfide linked. Binds PLXNB1. Interacts when phosphorylated with downstream effectors including STAT3, PIK3R1, SRC, PCLG1, GRB2 and GAB1. Interacts with SPSB1, SPSB2 and SPSB4. Interacts with INPP5D/SHIP1. When phosphorylated at Tyr-1356, interacts with INPPL1/SHIP2. Interacts with RANBP9 and RANBP10, as well as SPSB1, SPSB2, SPSB3 and SPSB4. SPSB1 binding occurs in the presence and in the absence of HGF, however HGF treatment has a positive effect on this interaction. Interacts with MUC20; prevents interaction with GRB2 and suppresses hepatocyte growth factor-induced cell proliferation. Interacts with GRB10. Interacts with PTPN1 and PTPN2. Interacts with HSP90AA1 and HSP90AB1; the interaction suppresses MET kinase activity. Interacts with tensin TNS3. Interacts (when phosphorylated) with tensin TNS4 (via SH2 domain); the interaction increases MET protein stability by inhibiting MET endocytosis and subsequent lysosomal degradation. Post-translationally, autophosphorylated in response to ligand binding on Tyr-1234 and Tyr-1235 in the kinase domain leading to further phosphorylation of Tyr-1349 and Tyr-1356 in the C-terminal multifunctional docking site. Dephosphorylated by PTPRJ at Tyr-1349 and Tyr-1365. Dephosphorylated by PTPN1 and PTPN2. Ubiquitinated. Ubiquitination by CBL regulates the receptor stability and activity through proteasomal degradation. In terms of processing, O-mannosylation of IPT/TIG domains by TMEM260 is required for protein maturation. O-mannosylated residues are composed of single mannose glycans that are not elongated or modified.

It localises to the membrane. The enzyme catalyses L-tyrosyl-[protein] + ATP = O-phospho-L-tyrosyl-[protein] + ADP + H(+). Its activity is regulated as follows. In its inactive state, the C-terminal tail interacts with the catalytic domain and inhibits the kinase activity. Upon ligand binding, the C-terminal tail is displaced and becomes phosphorylated, thus increasing the kinase activity. In terms of biological role, receptor tyrosine kinase that transduces signals from the extracellular matrix into the cytoplasm by binding to hepatocyte growth factor/HGF ligand. Regulates many physiological processes including proliferation, scattering, morphogenesis and survival. Ligand binding at the cell surface induces autophosphorylation of MET on its intracellular domain that provides docking sites for downstream signaling molecules. Following activation by ligand, interacts with the PI3-kinase subunit PIK3R1, PLCG1, SRC, GRB2, STAT3 or the adapter GAB1. Recruitment of these downstream effectors by MET leads to the activation of several signaling cascades including the RAS-ERK, PI3 kinase-AKT, or PLCgamma-PKC. The RAS-ERK activation is associated with the morphogenetic effects while PI3K/AKT coordinates prosurvival effects. During embryonic development, MET signaling plays a role in gastrulation, development and migration of muscles and neuronal precursors, angiogenesis and kidney formation. In adults, participates in wound healing as well as organ regeneration and tissue remodeling. Also promotes differentiation and proliferation of hematopoietic cells. This chain is Hepatocyte growth factor receptor (MET), found in Nomascus leucogenys (Northern white-cheeked gibbon).